Here is a 195-residue protein sequence, read N- to C-terminus: Group XIIB secretory phospholipase A2-like protein (195 aa).

An N-terminal signal peptide occupies residues methionine 1–alanine 19. Ca(2+) contacts are provided by serine 89, tyrosine 91, leucine 93, and aspartate 116.

Belongs to the phospholipase A2 family. Ca(2+) serves as cofactor.

It is found in the secreted. Not known; does not seem to have catalytic activity. The protein is Group XIIB secretory phospholipase A2-like protein (Pla2g12b) of Mus musculus (Mouse).